The primary structure comprises 172 residues: UPF0398 protein gbs0290 (172 aa).

This sequence belongs to the UPF0398 family.

In Streptococcus agalactiae serotype III (strain NEM316), this protein is UPF0398 protein gbs0290.